The sequence spans 179 residues: Ribosome maturation factor RimM (179 aa).

In terms of domain architecture, PRC barrel spans 96-179; the sequence is DNEFYWVDLI…KITVDWGLDY (84 aa).

The protein belongs to the RimM family. As to quaternary structure, binds ribosomal protein uS19.

It localises to the cytoplasm. Functionally, an accessory protein needed during the final step in the assembly of 30S ribosomal subunit, possibly for assembly of the head region. Essential for efficient processing of 16S rRNA. May be needed both before and after RbfA during the maturation of 16S rRNA. It has affinity for free ribosomal 30S subunits but not for 70S ribosomes. The sequence is that of Ribosome maturation factor RimM from Janthinobacterium sp. (strain Marseille) (Minibacterium massiliensis).